The primary structure comprises 108 residues: Protein YcgL (108 aa).

Residues 12-96 (MFCVIYRSSK…PPEDLLKQHL (85 aa)) enclose the YcgL domain.

The sequence is that of Protein YcgL from Escherichia coli (strain K12 / MC4100 / BW2952).